An 86-amino-acid chain; its full sequence is Large ribosomal subunit protein bL27c (86 aa).

The disordered stretch occupies residues 1 to 20; that stretch reads MAHKKGSGSTRNGRDSNAQR. Polar residues predominate over residues 7 to 19; the sequence is SGSTRNGRDSNAQ.

The protein belongs to the bacterial ribosomal protein bL27 family.

It localises to the plastid. The protein resides in the chloroplast. The polypeptide is Large ribosomal subunit protein bL27c (rpl27) (Guillardia theta (Cryptophyte)).